Here is a 321-residue protein sequence, read N- to C-terminus: Ferredoxin--NADP reductase (321 aa).

Residues aspartate 34, glutamine 42, tyrosine 47, valine 87, phenylalanine 119, aspartate 278, and threonine 319 each contribute to the FAD site.

It belongs to the ferredoxin--NADP reductase type 2 family. Homodimer. It depends on FAD as a cofactor.

The enzyme catalyses 2 reduced [2Fe-2S]-[ferredoxin] + NADP(+) + H(+) = 2 oxidized [2Fe-2S]-[ferredoxin] + NADPH. In Streptococcus pneumoniae serotype 4 (strain ATCC BAA-334 / TIGR4), this protein is Ferredoxin--NADP reductase.